We begin with the raw amino-acid sequence, 209 residues long: MKNPIINNIPCVLLAGGKSSRFIINNIPINKALMPLKSYPSLLEYQYTRLLKLFKQVIISAKKSYELNAPYLLEKEGGLFSPLFGIHNAFLTLQTPYIFFIAIDTPLVSFESIKILCGIQNFSVVYAKSPTKEHYLISLWHQSILNALNYTLKTQNYRLSDLIKNASSTAIHFDKEEEFLNLNTLKDYELAVQILKEGSNGRRRKDRTP.

GTP-binding positions include 14–16 (LAG), Lys31, and Asp104. A Mg(2+)-binding site is contributed by Asp104.

It belongs to the MobA family. Monomer. Mg(2+) is required as a cofactor.

It is found in the cytoplasm. It catalyses the reaction Mo-molybdopterin + GTP + H(+) = Mo-molybdopterin guanine dinucleotide + diphosphate. Transfers a GMP moiety from GTP to Mo-molybdopterin (Mo-MPT) cofactor (Moco or molybdenum cofactor) to form Mo-molybdopterin guanine dinucleotide (Mo-MGD) cofactor. In Helicobacter pylori (strain J99 / ATCC 700824) (Campylobacter pylori J99), this protein is Molybdenum cofactor guanylyltransferase.